Here is a 299-residue protein sequence, read N- to C-terminus: Regucalcin (299 aa).

Residue E18 participates in a divalent metal cation binding. Substrate is bound by residues R101, N103, and E121. The a divalent metal cation site is built by N154 and D204. Residue D204 is the Proton donor/acceptor of the active site. Residues K244 and K253 each carry the N6-succinyllysine modification.

This sequence belongs to the SMP-30/CGR1 family. Monomer. Zn(2+) serves as cofactor. Mn(2+) is required as a cofactor. Requires Ca(2+) as cofactor. The cofactor is Mg(2+).

The protein localises to the cytoplasm. It catalyses the reaction D-glucono-1,5-lactone + H2O = D-gluconate + H(+). It functions in the pathway cofactor biosynthesis; L-ascorbate biosynthesis via UDP-alpha-D-glucuronate pathway; L-ascorbate from UDP-alpha-D-glucuronate: step 3/4. Functionally, gluconolactonase with low activity towards other sugar lactones, including gulonolactone and galactonolactone. Catalyzes a key step in ascorbic acid (vitamin C) biosynthesis. Can also hydrolyze diisopropyl phosphorofluoridate and phenylacetate (in vitro). Calcium-binding protein. Modulates Ca(2+) signaling, and Ca(2+)-dependent cellular processes and enzyme activities. This chain is Regucalcin (RGN), found in Bos taurus (Bovine).